The chain runs to 381 residues: uncharacterized protein (381 aa).

9 helical membrane passes run 59-79 (LITL…LYYM), 84-104 (GVAP…YQTM), 147-167 (VGVN…FFMA), 190-210 (SMMA…FNTI), 222-242 (LVLL…TFSI), 250-270 (ILTN…SIYW), 284-304 (HYFM…LILA), 311-331 (LSPI…IYKF), and 344-364 (VYFF…VTSL).

It belongs to the CDP-alcohol phosphatidyltransferase class-I family.

The protein resides in the membrane. This is an uncharacterized protein from Dictyostelium discoideum (Social amoeba).